A 141-amino-acid chain; its full sequence is Large ribosomal subunit protein uL11 (141 aa).

The protein belongs to the universal ribosomal protein uL11 family. Part of the ribosomal stalk of the 50S ribosomal subunit. Interacts with L10 and the large rRNA to form the base of the stalk. L10 forms an elongated spine to which L12 dimers bind in a sequential fashion forming a multimeric L10(L12)X complex. In terms of processing, one or more lysine residues are methylated.

Forms part of the ribosomal stalk which helps the ribosome interact with GTP-bound translation factors. The polypeptide is Large ribosomal subunit protein uL11 (Microcystis aeruginosa (strain NIES-843 / IAM M-2473)).